A 431-amino-acid chain; its full sequence is Serine/threonine-protein kinase Sgk1 (431 aa).

Positions 1-60 (MTVKTEAAKGTLTYSRMRGMVAILIAFMKQRRMGLNDFIQKIANNSYACKHPEVQSILKI) are necessary for localization to the mitochondria. Residues 66–92 (PELMNANPSPPPSPSQQINLGPSSNPH) form a disordered region. A Phosphoserine modification is found at Ser74. A Phosphoserine; by MAPK7 modification is found at Ser78. The span at 81-91 (QQINLGPSSNP) shows a compositional bias: polar residues. One can recognise a Protein kinase domain in the interval 98–355 (FHFLKVIGKG…FMEIKSHVFF (258 aa)). ATP is bound by residues 104–112 (IGKGSFGKV) and Lys127. The short motif at 131–141 (KKAILKKKEEK) is the Nuclear localization signal element. Catalysis depends on Asp222, which acts as the Proton acceptor. Thr256 is modified (phosphothreonine; by PDPK1). An AGC-kinase C-terminal domain is found at 356–431 (SLINWDDLIN…SYAPPTDSFL (76 aa)). A Phosphothreonine; by PKA modification is found at Thr369. Residues Ser397, Ser401, and Ser422 each carry the phosphoserine modification.

It belongs to the protein kinase superfamily. AGC Ser/Thr protein kinase family. As to quaternary structure, homodimer; disulfide-linked. Forms a trimeric complex with FBXW7 and NOTCH1. Interacts with MAPK3/ERK1, MAPK1/ERK2, MAP2K1/MEK1, MAP2K2/MEK2, NEDD4, NEDD4L, MAPT/TAU, MAPK7, CREB1, SLC9A3R2/NHERF2 and KCNJ1/ROMK1. Associates with the mammalian target of rapamycin complex 2 (mTORC2) via an interaction with MAPKAP1/SIN1. In terms of processing, regulated by phosphorylation. Activated by phosphorylation on Ser-422 by mTORC2, transforming it into a substrate for PDPK1 which phosphorylates it on Thr-256. Phosphorylation on Ser-397 and Ser-401 are also essential for its activity. Phosphorylation on Ser-78 by MAPK7 is required for growth factor-induced cell cycle progression. Ubiquitinated by NEDD4L; which promotes proteasomal degradation. Ubiquitinated by SYVN1 at the endoplasmic reticulum; which promotes rapid proteasomal degradation and maintains a high turnover rate in resting cells.

The protein localises to the cytoplasm. It localises to the nucleus. Its subcellular location is the endoplasmic reticulum membrane. The protein resides in the cell membrane. It is found in the mitochondrion. It catalyses the reaction L-seryl-[protein] + ATP = O-phospho-L-seryl-[protein] + ADP + H(+). The catalysed reaction is L-threonyl-[protein] + ATP = O-phospho-L-threonyl-[protein] + ADP + H(+). Two specific sites, one in the kinase domain (Thr-256) and the other in the C-terminal regulatory region (Ser-422), need to be phosphorylated for its full activation. Phosphorylation at Ser-397 and Ser-401 are also essential for its activity. Activated by WNK1, WNK2, WNK3 and WNK4; which promote phosphorylation by mTORC2. Its function is as follows. Serine/threonine-protein kinase which is involved in the regulation of a wide variety of ion channels, membrane transporters, cellular enzymes, transcription factors, neuronal excitability, cell growth, proliferation, survival, migration and apoptosis. Plays an important role in cellular stress response. Contributes to regulation of renal Na(+) retention, renal K(+) elimination, salt appetite, gastric acid secretion, intestinal Na(+)/H(+) exchange and nutrient transport, insulin-dependent salt sensitivity of blood pressure, salt sensitivity of peripheral glucose uptake, cardiac repolarization and memory consolidation. Up-regulates Na(+) channels: SCNN1A/ENAC, SCN5A and ASIC1/ACCN2, K(+) channels: KCNJ1/ROMK1, KCNA1-5, KCNQ1-5 and KCNE1, epithelial Ca(2+) channels: TRPV5 and TRPV6, chloride channels: BSND, CLCN2 and CFTR, glutamate transporters: SLC1A3/EAAT1, SLC1A2 /EAAT2, SLC1A1/EAAT3, SLC1A6/EAAT4 and SLC1A7/EAAT5, amino acid transporters: SLC1A5/ASCT2, SLC38A1/SN1 and SLC6A19, creatine transporter: SLC6A8, Na(+)/dicarboxylate cotransporter: SLC13A2/NADC1, Na(+)-dependent phosphate cotransporter: SLC34A2/NAPI-2B, glutamate receptor: GRIK2/GLUR6. Up-regulates carriers: SLC9A3/NHE3, SLC12A1/NKCC2, SLC12A3/NCC, SLC5A3/SMIT, SLC2A1/GLUT1, SLC5A1/SGLT1 and SLC15A2/PEPT2. Regulates enzymes: GSK3A/B, PMM2 and Na(+)/K(+) ATPase, and transcription factors: CTNNB1 and nuclear factor NF-kappa-B. Stimulates sodium transport into epithelial cells by enhancing the stability and expression of SCNN1A/ENAC. This is achieved by phosphorylating the NEDD4L ubiquitin E3 ligase, promoting its interaction with 14-3-3 proteins, thereby preventing it from binding to SCNN1A/ENAC and targeting it for degradation. Regulates store-operated Ca(+2) entry (SOCE) by stimulating ORAI1 and STIM1. Regulates KCNJ1/ROMK1 directly via its phosphorylation or indirectly via increased interaction with SLC9A3R2/NHERF2. Phosphorylates MDM2 and activates MDM2-dependent ubiquitination of p53/TP53. Phosphorylates MAPT/TAU and mediates microtubule depolymerization and neurite formation in hippocampal neurons. Phosphorylates SLC2A4/GLUT4 and up-regulates its activity. Phosphorylates APBB1/FE65 and promotes its localization to the nucleus. Phosphorylates MAPK1/ERK2 and activates it by enhancing its interaction with MAP2K1/MEK1 and MAP2K2/MEK2. Phosphorylates FBXW7 and plays an inhibitory role in the NOTCH1 signaling. Phosphorylates FOXO1 resulting in its relocalization from the nucleus to the cytoplasm. Phosphorylates FOXO3, promoting its exit from the nucleus and interference with FOXO3-dependent transcription. Phosphorylates BRAF and MAP3K3/MEKK3 and inhibits their activity. Phosphorylates SLC9A3/NHE3 in response to dexamethasone, resulting in its activation and increased localization at the cell membrane. Phosphorylates CREB1. Necessary for vascular remodeling during angiogenesis. The sequence is that of Serine/threonine-protein kinase Sgk1 (SGK1) from Macaca fascicularis (Crab-eating macaque).